The primary structure comprises 372 residues: Aminomethyltransferase (372 aa).

This sequence belongs to the GcvT family. As to quaternary structure, the glycine cleavage system is composed of four proteins: P, T, L and H.

The catalysed reaction is N(6)-[(R)-S(8)-aminomethyldihydrolipoyl]-L-lysyl-[protein] + (6S)-5,6,7,8-tetrahydrofolate = N(6)-[(R)-dihydrolipoyl]-L-lysyl-[protein] + (6R)-5,10-methylene-5,6,7,8-tetrahydrofolate + NH4(+). The glycine cleavage system catalyzes the degradation of glycine. The polypeptide is Aminomethyltransferase (Streptomyces avermitilis (strain ATCC 31267 / DSM 46492 / JCM 5070 / NBRC 14893 / NCIMB 12804 / NRRL 8165 / MA-4680)).